Here is an 88-residue protein sequence, read N- to C-terminus: U-scoloptoxin(12)-Sa1a (88 aa).

The first 20 residues, 1-20, serve as a signal peptide directing secretion; that stretch reads MKYMIITVVILFTCALKMFC.

This sequence belongs to the scoloptoxin-12 family. In terms of processing, contains 3 disulfide bonds. Expressed by the venom gland.

The protein localises to the secreted. This is U-scoloptoxin(12)-Sa1a from Scolopendra alternans (Florida Keys giant centipede).